The primary structure comprises 171 residues: Large ribosomal subunit protein bL9 (171 aa).

It belongs to the bacterial ribosomal protein bL9 family.

Binds to the 23S rRNA. The polypeptide is Large ribosomal subunit protein bL9 (Rickettsia africae (strain ESF-5)).